The sequence spans 286 residues: Pantothenate synthetase (286 aa).

Position 30 to 37 (30 to 37 (MGFLHEGH)) interacts with ATP. His37 serves as the catalytic Proton donor. Gln61 contacts (R)-pantoate. Position 61 (Gln61) interacts with beta-alanine. Residue 147 to 150 (GLKD) participates in ATP binding. Gln153 contributes to the (R)-pantoate binding site. ATP contacts are provided by residues Val176 and 184–187 (KSSR).

This sequence belongs to the pantothenate synthetase family. As to quaternary structure, homodimer.

Its subcellular location is the cytoplasm. The enzyme catalyses (R)-pantoate + beta-alanine + ATP = (R)-pantothenate + AMP + diphosphate + H(+). The protein operates within cofactor biosynthesis; (R)-pantothenate biosynthesis; (R)-pantothenate from (R)-pantoate and beta-alanine: step 1/1. Its function is as follows. Catalyzes the condensation of pantoate with beta-alanine in an ATP-dependent reaction via a pantoyl-adenylate intermediate. The polypeptide is Pantothenate synthetase (Bacillus velezensis (strain DSM 23117 / BGSC 10A6 / LMG 26770 / FZB42) (Bacillus amyloliquefaciens subsp. plantarum)).